Reading from the N-terminus, the 451-residue chain is Ribulose bisphosphate carboxylase large chain (451 aa).

Residue lysine 5 is modified to N6,N6,N6-trimethyllysine. Residues asparagine 114 and threonine 164 each contribute to the substrate site. Residue lysine 166 is the Proton acceptor of the active site. A substrate-binding site is contributed by lysine 168. Residues lysine 192, aspartate 194, and glutamate 195 each contribute to the Mg(2+) site. Residue lysine 192 is modified to N6-carboxylysine. The Proton acceptor role is filled by histidine 285. Arginine 286, histidine 318, and serine 370 together coordinate substrate.

The protein belongs to the RuBisCO large chain family. Type I subfamily. In terms of assembly, heterohexadecamer of 8 large chains and 8 small chains; disulfide-linked. The disulfide link is formed within the large subunit homodimers. The cofactor is Mg(2+). The disulfide bond which can form in the large chain dimeric partners within the hexadecamer appears to be associated with oxidative stress and protein turnover.

The protein resides in the plastid. It localises to the chloroplast. The catalysed reaction is 2 (2R)-3-phosphoglycerate + 2 H(+) = D-ribulose 1,5-bisphosphate + CO2 + H2O. It carries out the reaction D-ribulose 1,5-bisphosphate + O2 = 2-phosphoglycolate + (2R)-3-phosphoglycerate + 2 H(+). Its function is as follows. RuBisCO catalyzes two reactions: the carboxylation of D-ribulose 1,5-bisphosphate, the primary event in carbon dioxide fixation, as well as the oxidative fragmentation of the pentose substrate in the photorespiration process. Both reactions occur simultaneously and in competition at the same active site. This Aristea glauca protein is Ribulose bisphosphate carboxylase large chain.